The following is a 171-amino-acid chain: 3-hydroxydecanoyl-[acyl-carrier-protein] dehydratase (171 aa).

Residue histidine 70 is part of the active site.

It belongs to the thioester dehydratase family. FabA subfamily. As to quaternary structure, homodimer.

Its subcellular location is the cytoplasm. The catalysed reaction is a (3R)-hydroxyacyl-[ACP] = a (2E)-enoyl-[ACP] + H2O. It carries out the reaction (3R)-hydroxydecanoyl-[ACP] = (2E)-decenoyl-[ACP] + H2O. The enzyme catalyses (2E)-decenoyl-[ACP] = (3Z)-decenoyl-[ACP]. It functions in the pathway lipid metabolism; fatty acid biosynthesis. Functionally, necessary for the introduction of cis unsaturation into fatty acids. Catalyzes the dehydration of (3R)-3-hydroxydecanoyl-ACP to E-(2)-decenoyl-ACP and then its isomerization to Z-(3)-decenoyl-ACP. Can catalyze the dehydratase reaction for beta-hydroxyacyl-ACPs with saturated chain lengths up to 16:0, being most active on intermediate chain length. This chain is 3-hydroxydecanoyl-[acyl-carrier-protein] dehydratase, found in Shewanella denitrificans (strain OS217 / ATCC BAA-1090 / DSM 15013).